We begin with the raw amino-acid sequence, 213 residues long: MNKESKDDDMSLGKFSFSHFLYYLVLIVVIVYGLYKLFTGHGSDINFGKFLLRTSPYMWANLGIALCVGLSVVGAAWGIFITGSSMIGAGVRAPRITTKNLISIIFCEVVAIYGLIIAIVFSSKLTVATAENMYSKSNLYTGYSLFWAGITVGASNLICGIAVGITGATAAISDAADSALFVKILVIEIFGSILGLLGLIVGLLMAGKASEFQ.

Topologically, residues 1–14 (MNKESKDDDMSLGK) are vacuolar. A helical transmembrane segment spans residues 15–35 (FSFSHFLYYLVLIVVIVYGLY). Topologically, residues 36–61 (KLFTGHGSDINFGKFLLRTSPYMWAN) are cytoplasmic. A helical membrane pass occupies residues 62-82 (LGIALCVGLSVVGAAWGIFIT). The Vacuolar segment spans residues 83–100 (GSSMIGAGVRAPRITTKN). A helical transmembrane segment spans residues 101 to 121 (LISIIFCEVVAIYGLIIAIVF). Residues 122 to 144 (SSKLTVATAENMYSKSNLYTGYS) lie on the Cytoplasmic side of the membrane. A helical membrane pass occupies residues 145–165 (LFWAGITVGASNLICGIAVGI). At 166–183 (TGATAAISDAADSALFVK) the chain is on the vacuolar side. The helical transmembrane segment at 184 to 204 (ILVIEIFGSILGLLGLIVGLL) threads the bilayer. Over 205 to 213 (MAGKASEFQ) the chain is Cytoplasmic.

The protein belongs to the V-ATPase proteolipid subunit family. V-ATPase is a heteromultimeric enzyme composed of a peripheral catalytic V1 complex (components A to H) attached to an integral membrane V0 proton pore complex (components: a, c, c', c'', d, e, f and VOA1). The decameric c-ring forms the proton-conducting pore, and is composed of eight proteolipid subunits c, one subunit c' and one subunit c''.

It is found in the vacuole membrane. Functionally, proton-conducting pore forming subunit of the V0 complex of vacuolar(H+)-ATPase (V-ATPase), a multisubunit enzyme composed of a peripheral complex (V1) that hydrolyzes ATP and a membrane integral complex (V0) that translocates protons. V-ATPase is responsible for acidifying and maintaining the pH of intracellular compartments. The chain is V-type proton ATPase subunit c'' (VMA16) from Saccharomyces cerevisiae (strain ATCC 204508 / S288c) (Baker's yeast).